The following is a 934-amino-acid chain: MKIKHYPGKAVDASLSLEGSSAMGALYEANWLRAANQPAAPATTGTKLSRQSSSAGSSFLIEGISALSKYQMTLENIRQLELQSRDKRIASTIKELSGYRPSALQHHQQQQMHNVWVAEDQDQEHEELEDASEGKEKLASIQEPPAVNHYVLDPTERPRVPRPRQQFSVKPPSLRRSQTMSQPPSYATLRSPPKIKENLSKSSSAYSTFSSAAEDSQDQVVICQQPQRLMAPPPREPPPEPPKRVSKPLSRSQTSVQRYATVRMPNQTTSFSRSVVRSRDSTASQRRLSLEQAIEGLKLEGEKAVRQKSPQISPAASSNGSSKDLNGEGFCIPRPRLIVPVHTYARRRRTGNLKEQSSGGQEEEAEKGKGWKDFYVLSQDRHSSFYINRIGQNYDYDYPINFNIFSPDGRVEVSREGKYLSTLSGAKVLGELAILYNCQRTATITAITECNLWAIERQCFQTIMMRTGLIRQAEYSDFLKSVPIFKDLAEDTLIKISDVLEETHYQRGDYIVRQGARGDTFFIISKGKVRVTIKQQDTQEEKFIRMLGKGDFFGEKALQGDDLRTANIICESADGVSCLVIDRETFNQLISNLDEIKHRYDDEGAMERRKINEEFRDINLTDLRVIATLGVGGFGRVELVQTNGDSSRSFALKQMKKSQIVETRQQQHIMSEKEIMGEANCQFIVKLFKTFKDKKYLYMLMESCLGGELWTILRDKGNFDDSTTRFYTACVVEAFDYLHSRNIIYRDLKPENLLLNERGYVKLVDFGFAKKLQTGRKTWTFCGTPEYVAPEVILNRGHDISADYWSLGVLMFELLTGTPPFTGSDPMRTYNIILKGIDAIEFPRNITRNASNLIKKLCRDNPAERLGYQRGGISEIQKHKWFDGFYWWGLQNCTLEPPIKPAVKSVVDTTNFDDYPPDPEGPPPDDVTGWDKDF.

Acidic residues predominate over residues 121–131 (QDQEHEELEDA). Disordered stretches follow at residues 121-287 (QDQE…SQRR) and 301-327 (GEKA…DLNG). Over residues 175-185 (RRSQTMSQPPS) the composition is skewed to polar residues. Over residues 200–213 (SKSSSAYSTFSSAA) the composition is skewed to low complexity. Polar residues-rich tracts occupy residues 218–227 (DQVVICQQPQ), 249–258 (LSRSQTSVQR), and 308–324 (KSPQ…SSKD). 3',5'-cyclic GMP contacts are provided by residues 430–433 (GELA), 440–441 (RT), Arg-545, 554–557 (GEKA), and 564–565 (RT). The 260-residue stretch at 623–882 (LRVIATLGVG…ISEIQKHKWF (260 aa)) folds into the Protein kinase domain. ATP contacts are provided by residues 629-637 (LGVGGFGRV) and Lys-653. Asp-747 acts as the Proton acceptor in catalysis. Positions 883–934 (DGFYWWGLQNCTLEPPIKPAVKSVVDTTNFDDYPPDPEGPPPDDVTGWDKDF) constitute an AGC-kinase C-terminal domain. The interval 910–934 (TNFDDYPPDPEGPPPDDVTGWDKDF) is disordered.

The protein belongs to the protein kinase superfamily. AGC Ser/Thr protein kinase family. cGMP subfamily.

The catalysed reaction is L-seryl-[protein] + ATP = O-phospho-L-seryl-[protein] + ADP + H(+). It catalyses the reaction L-threonyl-[protein] + ATP = O-phospho-L-threonyl-[protein] + ADP + H(+). The sequence is that of cGMP-dependent protein kinase, isozyme 2 forms cD5/T2 (for) from Drosophila melanogaster (Fruit fly).